The following is a 311-amino-acid chain: Sensor histidine kinase YcbM (311 aa).

A helical membrane pass occupies residues 1-21; the sequence is MTVLWVAAVIALACLNVIQFI. Residues 22–311 lie on the Cytoplasmic side of the membrane; that stretch reads MKKKRDGNLA…FTITLKRMTY (290 aa). Positions 92–310 constitute a Histidine kinase domain; it reads NMSHDLKTPL…AFTITLKRMT (219 aa). Residue His-95 is modified to Phosphohistidine; by autocatalysis.

It localises to the cell membrane. It catalyses the reaction ATP + protein L-histidine = ADP + protein N-phospho-L-histidine.. Member of the two-component regulatory system YcbM/YcbL. Probably activates YcbL by phosphorylation. This is Sensor histidine kinase YcbM (ycbM) from Bacillus subtilis (strain 168).